A 98-amino-acid polypeptide reads, in one-letter code: Small ribosomal subunit protein uS19 (98 aa).

It belongs to the universal ribosomal protein uS19 family.

Its function is as follows. Protein S19 forms a complex with S13 that binds strongly to the 16S ribosomal RNA. This Chlorobaculum tepidum (strain ATCC 49652 / DSM 12025 / NBRC 103806 / TLS) (Chlorobium tepidum) protein is Small ribosomal subunit protein uS19.